The following is a 77-amino-acid chain: Secapin-2 (77 aa).

The first 32 residues, 1-32 (MKNYSKNATYLITVLLFSFVTMLLIIPSKCEA), serve as a signal peptide directing secretion. A propeptide spanning residues 33–52 (VSNDMQPLEARTADLVQQPR) is cleaved from the precursor. Cysteines 61 and 72 form a disulfide. Proline 77 is modified (proline amide).

This sequence belongs to the secapin family. Expressed by the venom gland.

The protein localises to the secreted. Its function is as follows. Serine protease inhibitor which exhibits antifibrinolytic, antielastolytic and antimicrobial activities. Displays antimicrobial activity against bacteria and fungi. Likely functions in the innate immune response to microbial infection and possibly in the venom, as an antifibrinolytic agent. Induces hyperalgesia and edema mediated by leukotrienes when injected into mice. Does not induce hemolytic activity, mast cell degranulation, or chemotactic activity for polymorphonucleated leukocytes (PMNL). The chain is Secapin-2 from Apis mellifera (Honeybee).